The chain runs to 523 residues: ATP synthase subunit alpha (523 aa).

ATP is bound at residue 173 to 180 (GDRQTGKT).

Belongs to the ATPase alpha/beta chains family. In terms of assembly, F-type ATPases have 2 components, CF(1) - the catalytic core - and CF(0) - the membrane proton channel. CF(1) has five subunits: alpha(3), beta(3), gamma(1), delta(1), epsilon(1). CF(0) has three main subunits: a(1), b(2) and c(9-12). The alpha and beta chains form an alternating ring which encloses part of the gamma chain. CF(1) is attached to CF(0) by a central stalk formed by the gamma and epsilon chains, while a peripheral stalk is formed by the delta and b chains.

Its subcellular location is the cell membrane. The enzyme catalyses ATP + H2O + 4 H(+)(in) = ADP + phosphate + 5 H(+)(out). In terms of biological role, produces ATP from ADP in the presence of a proton gradient across the membrane. The alpha chain is a regulatory subunit. The chain is ATP synthase subunit alpha from Streptomyces griseus subsp. griseus (strain JCM 4626 / CBS 651.72 / NBRC 13350 / KCC S-0626 / ISP 5235).